The chain runs to 701 residues: Aryl hydrocarbon receptor repressor (701 aa).

The disordered stretch occupies residues 1–38 (MMIPSGECTYAGRKRRKPIQKRRLTMGTEKSNPSKRHR). The span at 12–24 (GRKRRKPIQKRRL) shows a compositional bias: basic residues. Positions 25–78 (TMGTEKSNPSKRHRDRLNTELDHLASLLPFSPDIISKLDKLSVLRLSVSYLRVK) constitute a bHLH domain. The PAS domain occupies 106–176 (PVQEGRLLLE…RQLHWAMDPP (71 aa)). Disordered regions lie at residues 360 to 389 (DPKG…QREM) and 409 to 436 (TEQR…LVPH). Positions 365–375 (SGDREEDDQKH) are enriched in basic and acidic residues. Over residues 414 to 430 (QEGTTKLTRQPSKSEPS) the composition is skewed to polar residues. A needed for transcriptional repression region spans residues 555-701 (ASTTSCVWLG…SKGSDGIFLP (147 aa)). Glycyl lysine isopeptide (Lys-Gly) (interchain with G-Cter in SUMO2) cross-links involve residues lysine 583 and lysine 660.

In terms of assembly, interacts with ARNT, ANKRA2, HDAC4 and HDAC5. Interacts with ARNT; forms a heterodimer with ARNT. Highly expressed in testis and weakly expressed in heart and liver. Highly expressed in small intestine and cecum in a male-dominant sexual dimorphic fashion.

The protein resides in the cytoplasm. Its subcellular location is the nucleus. Its function is as follows. Mediates dioxin toxicity and is involved in regulation of cell growth and differentiation. Represses the transcription activity of AHR by competing with this transcription factor for heterodimer formation with the ARNT and subsequently binding to the xenobiotic response element (XRE) sequence present in the promoter regulatory region of variety of genes. Represses CYP1A1 by binding the XRE sequence and recruiting ANKRA2, HDAC4 and/or HDAC5. Autoregulates its expression by associating with its own XRE site. The protein is Aryl hydrocarbon receptor repressor (Ahrr) of Rattus norvegicus (Rat).